Here is a 351-residue protein sequence, read N- to C-terminus: Phosphoribosylformylglycinamidine cyclo-ligase (351 aa).

It belongs to the AIR synthase family.

It is found in the cytoplasm. The catalysed reaction is 2-formamido-N(1)-(5-O-phospho-beta-D-ribosyl)acetamidine + ATP = 5-amino-1-(5-phospho-beta-D-ribosyl)imidazole + ADP + phosphate + H(+). It functions in the pathway purine metabolism; IMP biosynthesis via de novo pathway; 5-amino-1-(5-phospho-D-ribosyl)imidazole from N(2)-formyl-N(1)-(5-phospho-D-ribosyl)glycinamide: step 2/2. The protein is Phosphoribosylformylglycinamidine cyclo-ligase of Burkholderia vietnamiensis (strain G4 / LMG 22486) (Burkholderia cepacia (strain R1808)).